A 318-amino-acid polypeptide reads, in one-letter code: Endochitinase 1 (318 aa).

Residues 1-18 form the signal peptide; that stretch reads EFTTLFLLFSVLLLSASA. The Chitin-binding type-1 domain occupies 19–60; sequence EQCGSQAGGALCASGLCCSKFGWCGDTNDYCGPGNCQSQCPG. 7 disulfides stabilise this stretch: Cys-21-Cys-36, Cys-30-Cys-42, Cys-35-Cys-49, Cys-54-Cys-58, Cys-89-Cys-152, Cys-164-Cys-172, and Cys-271-Cys-303. Residue Glu-134 is the Proton donor of the active site. Positions 312 to 318 are cleaved as a propeptide — removed in mature form, vacuolar targeting; sequence GLLVDTM.

This sequence belongs to the glycosyl hydrolase 19 family. Chitinase class I subfamily.

The protein resides in the vacuole. It carries out the reaction Random endo-hydrolysis of N-acetyl-beta-D-glucosaminide (1-&gt;4)-beta-linkages in chitin and chitodextrins.. In terms of biological role, defense against chitin-containing fungal pathogens. The protein is Endochitinase 1 (CHTB1) of Solanum tuberosum (Potato).